A 234-amino-acid chain; its full sequence is MSVYLAEFLGTMLLIILGDGVVANVVLKKSKGHNSGWIVITTGWGLAVAMSVYLVGRISGAHINPAVTIGLAFIGQFPWSKVPGYIFSQILGAFVGAILVYLTYLPHWKETDDPDAKLAVFCTGPAVRKYGANLLTEIIGTMVLLMGVLGIGANKLADGLNPLLVGFLVWSIGLSLGGPTGYAINPARDFGPRLAHAILPIPGKRDSDWSYSWVPIIGPIIGGILGASLYNWLF.

A run of 2 helical transmembrane segments spans residues 3-23 (VYLAEFLGTMLLIILGDGVVA) and 36-56 (GWIVITTGWGLAVAMSVYLVG). The short motif at 64-66 (NPA) is the NPA 1 element. 3 consecutive transmembrane segments (helical) span residues 82–102 (VPGYIFSQILGAFVGAILVYL), 134–154 (LLTEIIGTMVLLMGVLGIGAN), and 164–184 (LVGFLVWSIGLSLGGPTGYAI). Residues 185–187 (NPA) carry the NPA 2 motif. The chain crosses the membrane as a helical span at residues 214 to 234 (VPIIGPIIGGILGASLYNWLF).

Belongs to the MIP/aquaporin (TC 1.A.8) family.

It localises to the cell membrane. It catalyses the reaction glycerol(in) = glycerol(out). Its function is as follows. Mediates glycerol diffusion across the cytoplasmic membrane via a pore-type mechanism. This is Probable glycerol uptake facilitator protein (glpF) from Thermotoga maritima (strain ATCC 43589 / DSM 3109 / JCM 10099 / NBRC 100826 / MSB8).